A 255-amino-acid polypeptide reads, in one-letter code: 5'-nucleotidase SurE (255 aa).

Residues D8, D9, S40, and N93 each contribute to the a divalent metal cation site.

The protein belongs to the SurE nucleotidase family. Requires a divalent metal cation as cofactor.

It localises to the cytoplasm. The catalysed reaction is a ribonucleoside 5'-phosphate + H2O = a ribonucleoside + phosphate. In terms of biological role, nucleotidase that shows phosphatase activity on nucleoside 5'-monophosphates. This chain is 5'-nucleotidase SurE, found in Nitrobacter hamburgensis (strain DSM 10229 / NCIMB 13809 / X14).